The following is a 69-amino-acid chain: DNA-directed RNA polymerase subunit epsilon (69 aa).

This sequence belongs to the RNA polymerase subunit epsilon family. In terms of assembly, RNAP is composed of a core of 2 alpha, a beta and a beta' subunit. The core is associated with a delta subunit, and at least one of epsilon or omega. When a sigma factor is associated with the core the holoenzyme is formed, which can initiate transcription.

It carries out the reaction RNA(n) + a ribonucleoside 5'-triphosphate = RNA(n+1) + diphosphate. Functionally, a non-essential component of RNA polymerase (RNAP). This Lysinibacillus sphaericus (strain C3-41) protein is DNA-directed RNA polymerase subunit epsilon.